The following is a 79-amino-acid chain: Raniseptin-9 (79 aa).

Positions 1-22 are cleaved as a signal peptide; that stretch reads MAFLKKSLFLVLFLGIVSLSIC. The propeptide occupies 23–49; that stretch reads EEEKREGEEEEKQEEENEELSEEELRE. The tract at residues 27–46 is disordered; that stretch reads REGEEEEKQEEENEELSEEE. The span at 30 to 44 shows a compositional bias: acidic residues; the sequence is EEEEKQEEENEELSE.

It belongs to the frog skin active peptide (FSAP) family. Dermaseptin subfamily. Expressed by the skin glands.

The protein localises to the secreted. Has antibacterial activity. In Boana raniceps (Chaco tree frog), this protein is Raniseptin-9.